A 224-amino-acid chain; its full sequence is Cytidylate kinase (224 aa).

11–19 provides a ligand contact to ATP; it reads GPAAAGKST.

It belongs to the cytidylate kinase family. Type 1 subfamily.

It is found in the cytoplasm. The enzyme catalyses CMP + ATP = CDP + ADP. It catalyses the reaction dCMP + ATP = dCDP + ADP. This is Cytidylate kinase from Listeria welshimeri serovar 6b (strain ATCC 35897 / DSM 20650 / CCUG 15529 / CIP 8149 / NCTC 11857 / SLCC 5334 / V8).